Consider the following 722-residue polypeptide: MASCPDSDNSWVLAGSETLPVETLGPESRVDPESEEAPQALQDSSKADGKESAGTLNGEEMLFQTESSQGEGAALPEESEAKGALGGDDGHGTKRPGDTAVQEDLQETPMVTSLGPDTQDLERNIHPQNLPSSPRAVWKEHGCSSSDDDTDVDVEGLRRRRGREPSPPQPTAAVDGEDQAKGEGIGELGISLNMCFLGALVLLGLGILLFSGALLEPETEPVEEAELQVFPETELVQTVGNRQDEVEQLQASVPPDSVPSLQSMGLLLDKLAKENQDIRLLQAQLQAQKEELQSLLHQPKGLEEENARLREALQQGKTSHQALESELQQLRARLQGLEANCVRGVDGVCLNWGGSPQGGKATTEQGHKGQEPDTSLLEQHKQLEAEAKALRQELQKQWQLLGSVHRNLQRGLQDAGQGAPAHAGLAELGHMLAQTLQGLESQGINTGRSSNDSEAWHQKKPRFQHPREWSGREKWRGGQRDQKAEHWKLKKEESGQDRKKSWRDEGREFTGHWKENRPRAEESGSRKDSKRQDPKVHPRKSGNSHSGERQKHSWGKDNSPDSVSWEELLRRKYRPPQGCSGVADCARQEGLALFGVELAPVRQQELASVLREYLARLPWAGQLTKELPLSPAYFGEDGIFRHDRLRFRDFVDALEDSLEEVALKQTGDDDEVDDFEDFIFSHFFGDKALKRRSKKKEKQPWNHRAVGPREEHSRHPHHYHQG.

Residues 1–10 show a composition bias toward polar residues; it reads MASCPDSDNS. A disordered region spans residues 1 to 180; that stretch reads MASCPDSDNS…TAAVDGEDQA (180 aa). Positions 88-97 are enriched in basic and acidic residues; sequence DDGHGTKRPG. 4 positions are modified to phosphoserine: serine 133, serine 144, serine 145, and serine 146. Position 150 is a phosphothreonine (threonine 150). The residue at position 166 (serine 166) is a Phosphoserine. Coiled coils occupy residues 266–346 and 373–401; these read LLLD…RGVD and DTSL…WQLL. A compositionally biased stretch (polar residues) spans 442 to 453; that stretch reads QGINTGRSSNDS. Disordered regions lie at residues 442-562 and 691-722; these read QGIN…SPDS and RRSK…YHQG. Basic and acidic residues-rich tracts occupy residues 465–536 and 546–559; these read HPRE…DPKV and SGER…KDNS. A Nuclear localization signal motif is present at residues 482-502; sequence QKAEHWKLKKEESGQDRKKSW. Position 559 is a phosphoserine (serine 559). The short motif at 686–711 is the Nuclear localization signal element; that stretch reads DKALKRRSKKKEKQPWNHRAVGPREE.

As to quaternary structure, interacts with ESR1, PBX1, PBX2 and PBX3. Interacts with TEX11.

The protein localises to the cytoplasm. Its subcellular location is the cytoskeleton. It is found in the nucleus. Regulator of pre-B-cell leukemia transcription factors (BPXs) function. Inhibits the binding of PBX1-HOX complex to DNA and blocks the transcriptional activity of E2A-PBX1. Tethers estrogen receptor-alpha (ESR1) to microtubules and allows them to influence estrogen receptors-alpha signaling. The protein is Pre-B-cell leukemia transcription factor-interacting protein 1 (Pbxip1) of Rattus norvegicus (Rat).